A 263-amino-acid chain; its full sequence is Phosphonoacetaldehyde hydrolase (263 aa).

The Nucleophile role is filled by D10. Mg(2+) is bound by residues D10 and A12. Catalysis depends on K51, which acts as the Schiff-base intermediate with substrate. D184 lines the Mg(2+) pocket.

It belongs to the HAD-like hydrolase superfamily. PhnX family. Homodimer. Mg(2+) serves as cofactor.

The catalysed reaction is phosphonoacetaldehyde + H2O = acetaldehyde + phosphate + H(+). Its function is as follows. Involved in phosphonate degradation. This Bacteroides fragilis (strain ATCC 25285 / DSM 2151 / CCUG 4856 / JCM 11019 / LMG 10263 / NCTC 9343 / Onslow / VPI 2553 / EN-2) protein is Phosphonoacetaldehyde hydrolase.